The sequence spans 904 residues: Transcription factor E2F7 (904 aa).

Residues 61 to 80 (TPDRNPITPVKPVDRQPQVE) form a disordered region. Residue serine 96 is modified to Phosphoserine. Residues 143 to 212 (RKQKSLGLLC…VAKNQYGWHG (70 aa)) mediate DNA binding. The segment covering 252–269 (GERRKDGSPDPRDPHLLD) has biased composition (basic and acidic residues). The tract at residues 252–283 (GERRKDGSPDPRDPHLLDFSEADYPSSSANSR) is disordered. A DNA-binding region spans residues 283 to 368 (RKDKSLRIMS…GRKPAFKWIG (86 aa)). The residue at position 411 (serine 411) is a Phosphoserine. The segment at 560-628 (LSPESRSEED…VMPKKPSSST (69 aa)) is disordered. The residue at position 833 (serine 833) is a Phosphoserine. Residues 846 to 904 (AEQSPAPATPKSIQRRHRETFFKTPGSLGDPVFRRKERNQSRNTSSAQRRLEISSSGPD) are disordered. Polar residues predominate over residues 886–904 (SRNTSSAQRRLEISSSGPD).

This sequence belongs to the E2F/DP family. As to quaternary structure, interacts with HIF1A. Homodimer and heterodimer: mainly forms homodimers and, to a lesser extent, heterodimers with E2F8. Dimerization is important for DNA-binding. Interacts with MN1. As to expression, widely expressed with highest levels in skin and thymus and very low levels in brain, muscle and stomach. Expressed in trophoblast giant cells throughout placenta development (at protein level).

The protein localises to the nucleus. Functionally, atypical E2F transcription factor that participates in various processes such as angiogenesis, polyploidization of specialized cells and DNA damage response. Mainly acts as a transcription repressor that binds DNA independently of DP proteins and specifically recognizes the E2 recognition site 5'-TTTC[CG]CGC-3'. Directly represses transcription of classical E2F transcription factors such as E2F1. Acts as a regulator of S-phase by recognizing and binding the E2-related site 5'-TTCCCGCC-3' and mediating repression of G1/S-regulated genes. Plays a key role in polyploidization of cells in placenta and liver by regulating the endocycle, probably by repressing genes promoting cytokinesis and antagonizing action of classical E2F proteins (E2F1, E2F2 and/or E2F3). Required for placental development by promoting polyploidization of trophoblast giant cells. Also involved in DNA damage response: up-regulated by p53/TP53 following genotoxic stress and acts as a downstream effector of p53/TP53-dependent repression by mediating repression of indirect p53/TP53 target genes involved in DNA replication. Acts as a promoter of sprouting angiogenesis, possibly by acting as a transcription activator: associates with HIF1A, recognizes and binds the VEGFA promoter, which is different from canonical E2 recognition site, and activates expression of the VEGFA gene. Acts as a negative regulator of keratinocyte differentiation. This is Transcription factor E2F7 (E2f7) from Mus musculus (Mouse).